Consider the following 355-residue polypeptide: (3aS,4S,5R,7aS)-5-hydroxy-7a-methyl-1-oxo-octahydro-1H-indene-4-carboxyl-CoA dehydrogenase (355 aa).

Residues 21–23 (GMG), 173–175 (AGG), and 196–197 (GT) each bind FMN.

This sequence belongs to the nitronate monooxygenase family.

The enzyme catalyses (3aS,4S,5R,7aS)-5-hydroxy-7a-methyl-1-oxo-octahydro-1H-indene-4-carboxyl-CoA + NAD(+) = (5R,7aS)-5-hydroxy-7a-methyl-1-oxo-2,3,5,6,7,7a-hexahydro-1H-indene-carboxyl-CoA + NADH + H(+). It participates in steroid metabolism; cholesterol degradation. Its activity is regulated as follows. Requires the presence of IpdF. In terms of biological role, involved in the final steps of cholesterol and steroid degradation. Probably catalyzes the introduction of a double bound into the C ring of 5OH-HIC-CoA, leading to the formation of (5R,7aS)-5-hydroxy-7a-methyl-1-oxo-3,5,6,7-tetrahydro-2H-indene-4-carboxyl-CoA. This is (3aS,4S,5R,7aS)-5-hydroxy-7a-methyl-1-oxo-octahydro-1H-indene-4-carboxyl-CoA dehydrogenase from Mycobacterium tuberculosis (strain ATCC 25618 / H37Rv).